A 193-amino-acid polypeptide reads, in one-letter code: ATP-dependent Clp protease proteolytic subunit (193 aa).

The Nucleophile role is filled by S98. H123 is an active-site residue.

Belongs to the peptidase S14 family. Fourteen ClpP subunits assemble into 2 heptameric rings which stack back to back to give a disk-like structure with a central cavity, resembling the structure of eukaryotic proteasomes.

It is found in the cytoplasm. The enzyme catalyses Hydrolysis of proteins to small peptides in the presence of ATP and magnesium. alpha-casein is the usual test substrate. In the absence of ATP, only oligopeptides shorter than five residues are hydrolyzed (such as succinyl-Leu-Tyr-|-NHMec, and Leu-Tyr-Leu-|-Tyr-Trp, in which cleavage of the -Tyr-|-Leu- and -Tyr-|-Trp bonds also occurs).. Functionally, cleaves peptides in various proteins in a process that requires ATP hydrolysis. Has a chymotrypsin-like activity. Plays a major role in the degradation of misfolded proteins. The polypeptide is ATP-dependent Clp protease proteolytic subunit (Haemophilus influenzae (strain 86-028NP)).